A 617-amino-acid polypeptide reads, in one-letter code: V-type proton ATPase catalytic subunit A (617 aa).

Glycine 250–threonine 257 is a binding site for ATP.

Belongs to the ATPase alpha/beta chains family. V-ATPase is a heteromultimeric enzyme made up of two complexes: the ATP-hydrolytic V1 complex and the proton translocation V0 complex. The V1 complex consists of three catalytic AB heterodimers that form a heterohexamer, three peripheral stalks each consisting of EG heterodimers, one central rotor including subunits D and F, and the regulatory subunits C and H. The proton translocation complex V0 consists of the proton transport subunit a, a ring of proteolipid subunits c9c'', rotary subunit d, subunits e and f, and the accessory subunits VhaAC45 and ATP6AP2.

It catalyses the reaction ATP + H2O + 4 H(+)(in) = ADP + phosphate + 5 H(+)(out). ATP hydrolysis occurs at the interface between the nucleotide-binding domains of subunits A and B. ATP hydrolysis triggers a conformational change in the subunits D and F, which induces a shift of subunit d. The c-ring is subsequently rotated and results in a continuous proton translocation across the membrane. Its function is as follows. Catalytic subunit of the V1 complex of vacuolar(H+)-ATPase (V-ATPase), a multisubunit enzyme composed of a peripheral complex (V1) that hydrolyzes ATP and a membrane integral complex (V0) that translocates protons. V-ATPase is responsible for acidifying and maintaining the pH of intracellular compartments and in some cell types, is targeted to the plasma membrane, where it is responsible for acidifying the extracellular environment. In Manduca sexta (Tobacco hawkmoth), this protein is V-type proton ATPase catalytic subunit A (VHAA).